Reading from the N-terminus, the 300-residue chain is Ribosomal protein L11 methyltransferase (300 aa).

Positions 152, 173, 195, and 234 each coordinate S-adenosyl-L-methionine.

Belongs to the methyltransferase superfamily. PrmA family.

The protein resides in the cytoplasm. The catalysed reaction is L-lysyl-[protein] + 3 S-adenosyl-L-methionine = N(6),N(6),N(6)-trimethyl-L-lysyl-[protein] + 3 S-adenosyl-L-homocysteine + 3 H(+). Functionally, methylates ribosomal protein L11. The chain is Ribosomal protein L11 methyltransferase from Burkholderia mallei (strain NCTC 10247).